We begin with the raw amino-acid sequence, 75 residues long: UPF0235 protein MSMEG_3845 (75 aa).

The protein belongs to the UPF0235 family.

The chain is UPF0235 protein MSMEG_3845 from Mycolicibacterium smegmatis (strain ATCC 700084 / mc(2)155) (Mycobacterium smegmatis).